An 836-amino-acid polypeptide reads, in one-letter code: Subtilisin-like protease PIMMS2 (836 aa).

Active-site charge relay system residues include aspartate 155, histidine 222, and serine 414. The disordered stretch occupies residues 802 to 836; it reads EKKNKYNNSVLKRNEMKSHNNSQKTPKIIPRKYSR.

It belongs to the peptidase S8 family.

The protein localises to the cell membrane. It carries out the reaction Hydrolysis of proteins with broad specificity for peptide bonds, and a preference for a large uncharged residue in P1. Hydrolyzes peptide amides.. Its function is as follows. Probable serine protease which plays a role in ookinete traversal of the mosquito host midgut epithelium. This is Subtilisin-like protease PIMMS2 from Plasmodium berghei (strain Anka).